We begin with the raw amino-acid sequence, 392 residues long: MYFKPNFEQFLPKKEDYEKAKKALDYIIPILEKTPHIYDVFVGGSYAKGTWLGRDIDIFVRFPKKYKGQNISIYIEQTLKEHNVPYIKLHGSRDYFQTFYEGLKIEIVPILKLDSPLEREFVTDISQFHVEWVKKNIKGLENDAKYFKIFNKLINTYGAESYLGGLSGYACEILTIHYKGFTNLLKGILKWKPKVFIDIEKHYSNIKEAINELGKDKTASPLILIDPVDKTRNVAASLSYKNFALIIANSYLYLNNNILYKINKSDFETMLEITFRVEETKEDIKNAKISRLTRKIVNYLEKNGIEVYAYTIDFDKNKSYLWVCCEKITIKTKHLGPPAWVNLDKFLEKHNKFFIREDGRLYTIINKTFSVYDIKKVYPEIESIKFLNNNPT.

Residues Ser-45 and Lys-48 each contribute to the ATP site. Residues Ser-45 and Lys-48 each coordinate CTP. Residues Asp-55, Asp-57, and Glu-106 each contribute to the Mg(2+) site. Residues His-129, Lys-148, and Tyr-157 each coordinate ATP. His-129, Lys-148, and Tyr-157 together coordinate CTP.

It belongs to the tRNA nucleotidyltransferase/poly(A) polymerase family. Archaeal CCA-adding enzyme subfamily. As to quaternary structure, homodimer. Mg(2+) is required as a cofactor.

It catalyses the reaction a tRNA precursor + 2 CTP + ATP = a tRNA with a 3' CCA end + 3 diphosphate. The catalysed reaction is a tRNA with a 3' CCA end + 2 CTP + ATP = a tRNA with a 3' CCACCA end + 3 diphosphate. Its function is as follows. Catalyzes the addition and repair of the essential 3'-terminal CCA sequence in tRNAs without using a nucleic acid template. Adds these three nucleotides in the order of C, C, and A to the tRNA nucleotide-73, using CTP and ATP as substrates and producing inorganic pyrophosphate. tRNA 3'-terminal CCA addition is required both for tRNA processing and repair. Also involved in tRNA surveillance by mediating tandem CCA addition to generate a CCACCA at the 3' terminus of unstable tRNAs. While stable tRNAs receive only 3'-terminal CCA, unstable tRNAs are marked with CCACCA and rapidly degraded. In Nanoarchaeum equitans (strain Kin4-M), this protein is CCA-adding enzyme.